A 199-amino-acid polypeptide reads, in one-letter code: 3-isopropylmalate dehydratase small subunit (199 aa).

Belongs to the LeuD family. LeuD type 1 subfamily. Heterodimer of LeuC and LeuD.

It carries out the reaction (2R,3S)-3-isopropylmalate = (2S)-2-isopropylmalate. Its pathway is amino-acid biosynthesis; L-leucine biosynthesis; L-leucine from 3-methyl-2-oxobutanoate: step 2/4. Functionally, catalyzes the isomerization between 2-isopropylmalate and 3-isopropylmalate, via the formation of 2-isopropylmaleate. The protein is 3-isopropylmalate dehydratase small subunit of Aeromonas hydrophila subsp. hydrophila (strain ATCC 7966 / DSM 30187 / BCRC 13018 / CCUG 14551 / JCM 1027 / KCTC 2358 / NCIMB 9240 / NCTC 8049).